We begin with the raw amino-acid sequence, 188 residues long: FMN-dependent NADPH-azoreductase (188 aa).

Belongs to the azoreductase type 2 family. In terms of assembly, homotetramer. It depends on FMN as a cofactor.

Catalyzes the reductive cleavage of azo bond in aromatic azo compounds to the corresponding amines. Requires NADPH, but not NADH, as an electron donor for its activity. This Staphylococcus epidermidis (strain ATCC 12228 / FDA PCI 1200) protein is FMN-dependent NADPH-azoreductase (azo1).